A 499-amino-acid polypeptide reads, in one-letter code: MSRLQVQEQAVDSEGDSSLYRRDEEGTQSSHRMLGFSDALLSIIATVMILPVTHTEISPEQQFDKSIQKLLATRIAVYLMTFLIVTVAWAAHTRLFQVVGKIDDTLALLNLACMMTITLLPYTFSLMVTFPDVPLGIFLFCMCVIAIGSVQAMIVGYAFHFPHLLNPQIQCSTHRALSRRHILHLVLRGPALCFVAAVFSLFFFPLSYLLMVTVIFLPHISKATTWCKDKFMGHRESPAHNVEPFSIDLHAPLSKERVEAFSDGVYAIVATLLILDICEDNVPDPKDVQQKFSGSLVAALGAYGPQFLAYFGSFATVGLLWFAHHSLFLHVRKATQTMGLFNILSLAFVGGLPLAYQQTSAFARQPRDELERVRVSCAIIFFASIFQFAIWTTALLHQRETLQPAVQFGGQEHAFMFAKLALYPCASLLAFAATCLLSRFSTAIFHLMQIAVPFAFLLLRLLVRLALAGLQVLWDLWPERPQQDQGEPETQSQLLPASC.

The segment covering 1-10 (MSRLQVQEQA) has biased composition (polar residues). Residues 1–26 (MSRLQVQEQAVDSEGDSSLYRRDEEG) are disordered. Over 1–30 (MSRLQVQEQAVDSEGDSSLYRRDEEGTQSS) the chain is Cytoplasmic. A helical transmembrane segment spans residues 31 to 53 (HRMLGFSDALLSIIATVMILPVT). The short motif at 32-38 (RMLGFSD) is the RxxxFSD motif 1 element. The Lumenal portion of the chain corresponds to 54–74 (HTEISPEQQFDKSIQKLLATR). The segment at 55–60 (TEISPE) is short helix H1-1. The tract at residues 62 to 68 (QFDKSIQ) is short helix H2-1. Residues 75–97 (IAVYLMTFLIVTVAWAAHTRLFQ) form a helical membrane-spanning segment. Topologically, residues 98 to 103 (VVGKID) are cytoplasmic. The chain crosses the membrane as a helical span at residues 104 to 125 (DTLALLNLACMMTITLLPYTFS). At 126 to 135 (LMVTFPDVPL) the chain is on the lumenal side. A helical membrane pass occupies residues 136–157 (GIFLFCMCVIAIGSVQAMIVGY). Over 158-181 (AFHFPHLLNPQIQCSTHRALSRRH) the chain is Cytoplasmic. Residues 182-202 (ILHLVLRGPALCFVAAVFSLF) traverse the membrane as a helical segment. Residues 203-207 (FFPLS) lie on the Lumenal side of the membrane. A helical membrane pass occupies residues 208-227 (YLLMVTVIFLPHISKATTWC). At 228–254 (KDKFMGHRESPAHNVEPFSIDLHAPLS) the chain is on the cytoplasmic side. The chain crosses the membrane as a helical span at residues 255–279 (KERVEAFSDGVYAIVATLLILDICE). Residues 257–263 (RVEAFSD) carry the RxxxFSD motif 2 motif. Residues 280–306 (DNVPDPKDVQQKFSGSLVAALGAYGPQ) are Lumenal-facing. Residues 285 to 293 (PKDVQQKFS) are short helix H1-2. The tract at residues 295–301 (SLVAALG) is short helix H2-2. A helical membrane pass occupies residues 307–329 (FLAYFGSFATVGLLWFAHHSLFL). Residues 330–335 (HVRKAT) lie on the Cytoplasmic side of the membrane. Residues 336 to 357 (QTMGLFNILSLAFVGGLPLAYQ) traverse the membrane as a helical segment. Over 358–372 (QTSAFARQPRDELER) the chain is Lumenal. A helical membrane pass occupies residues 373 to 393 (VRVSCAIIFFASIFQFAIWTT). Residues 394 to 413 (ALLHQRETLQPAVQFGGQEH) are Cytoplasmic-facing. Residues 414–437 (AFMFAKLALYPCASLLAFAATCLL) traverse the membrane as a helical segment. Residues 438-439 (SR) are Lumenal-facing. The helical transmembrane segment at 440-466 (FSTAIFHLMQIAVPFAFLLLRLLVRLA) threads the bilayer. Residues 467–499 (LAGLQVLWDLWPERPQQDQGEPETQSQLLPASC) are Cytoplasmic-facing.

Belongs to the TMEM175 family. As to quaternary structure, homodimer. Interacts with AKT (AKT1, AKT2 or AKT3); leading to formation of the lysoK(GF) complex, which activates the channel. Interacts with LAMP1; inhibiting the proton channel activity of TMEM175. Interacts with LAMP2; inhibiting the proton channel activity of TMEM175.

The protein resides in the endosome membrane. The protein localises to the lysosome membrane. The enzyme catalyses H(+)(in) = H(+)(out). It carries out the reaction K(+)(in) = K(+)(out). Active at low pH (under pH 4.6): proton channel activity is activated by luminal side protons. Polyunsaturated fatty acids, such as arachidonic acid, also activate the channel activity. Proton channel activity is directly inhibited by LAMP1 or LAMP2, facilitating lysosomal acidification. Channel activity is activated following interaction with AKT (AKT1, AKT2 or AKT3): interaction promotes activation from closed to an open state. Activation by AKT is independent of AKT serine/threonine-protein kinase activity. Proton-activated proton channel that catalyzes proton efflux from endosomes and lysosomes to maintain a steady-state pH. Activated at low pH (under pH 4.6) by luminal side protons: selectively mediates lysosomal proton release from lysosomes, eliciting a proton leak that balances V-ATPase activity to maintain pH homeostasis. Regulation of lumenal pH stability is required for autophagosome-lysosome fusion. Also acts as a potassium channel at higher pH, regulating potassium conductance in endosomes and lysosomes. Constitutes the pore-forming subunit of the lysoK(GF) complex, a complex activated by extracellular growth factors. The lysoK(GF) complex is composed of TMEM175 and AKT (AKT1, AKT2 or AKT3), a major target of growth factor receptors: in the complex, TMEM175 channel is opened by conformational changes by AKT, leading to its activation. The lysoK(GF) complex is required to protect neurons against stress-induced damage. The sequence is that of Endosomal/lysosomal proton channel TMEM175 from Rattus norvegicus (Rat).